We begin with the raw amino-acid sequence, 270 residues long: Aliphatic sulfonates import ATP-binding protein SsuB 2 (270 aa).

The ABC transporter domain occupies 17 to 241 (LLDLRIARKL…PRDRRDPSLA (225 aa)). 50–57 (GPSGCGKS) serves as a coordination point for ATP.

This sequence belongs to the ABC transporter superfamily. Aliphatic sulfonates importer (TC 3.A.1.17.2) family. In terms of assembly, the complex is composed of two ATP-binding proteins (SsuB), two transmembrane proteins (SsuC) and a solute-binding protein (SsuA).

Its subcellular location is the cell inner membrane. The enzyme catalyses ATP + H2O + aliphatic sulfonate-[sulfonate-binding protein]Side 1 = ADP + phosphate + aliphatic sulfonateSide 2 + [sulfonate-binding protein]Side 1.. Part of the ABC transporter complex SsuABC involved in aliphatic sulfonates import. Responsible for energy coupling to the transport system. The protein is Aliphatic sulfonates import ATP-binding protein SsuB 2 of Burkholderia cenocepacia (strain HI2424).